Consider the following 540-residue polypeptide: Tyrosinase (540 aa).

Positions 1-19 are cleaved as a signal peptide; sequence MKSLFLSAVLLQFFETCWS. The Lumenal, melanosome portion of the chain corresponds to 20–480; sequence QFPRPCANSE…LQQAQQIWQW (461 aa). N87 carries an N-linked (GlcNAc...) asparagine glycan. The Cu cation site is built by H182, H205, and H214. N-linked (GlcNAc...) asparagine glycans are attached at residues N233, N293, and N340. 2 residues coordinate Cu cation: H366 and H370. An N-linked (GlcNAc...) asparagine glycan is attached at N374. H393 provides a ligand contact to Cu cation. Residues 481 to 501 form a helical membrane-spanning segment; it reads LLGAGILGALIATIVAAVIVF. Residues 502-540 lie on the Cytoplasmic side of the membrane; that stretch reads ARRKRRRNQKRKRAPSFGERQPLLQSSSEEGSSSYQTTL. The segment at 511–540 is disordered; sequence KRKRAPSFGERQPLLQSSSEEGSSSYQTTL. The segment covering 527 to 540 has biased composition (low complexity); sequence SSSEEGSSSYQTTL.

This sequence belongs to the tyrosinase family. The cofactor is Cu(2+).

Its subcellular location is the melanosome membrane. The catalysed reaction is 2 L-dopa + O2 = 2 L-dopaquinone + 2 H2O. The enzyme catalyses L-tyrosine + O2 = L-dopaquinone + H2O. This is a copper-containing oxidase that functions in the formation of pigments such as melanins and other polyphenolic compounds. This Oryzias latipes (Japanese rice fish) protein is Tyrosinase (tyr).